Here is a 465-residue protein sequence, read N- to C-terminus: uncharacterized protein (465 aa).

Over residues Lys-87–Gln-112 the composition is skewed to polar residues. Disordered regions lie at residues Lys-87–Asp-169 and Glu-201–Phe-244. The segment covering Asn-113–Asn-139 has biased composition (low complexity). Over residues Gly-141 to Ser-157 the composition is skewed to acidic residues. The segment covering Asn-217–Phe-244 has biased composition (low complexity).

This is an uncharacterized protein from Dictyostelium discoideum (Social amoeba).